A 60-amino-acid chain; its full sequence is Regulatory protein DegR (60 aa).

Its function is as follows. Stabilizes the phosphorylated form of DegU, leading to enhanced production of levansucrase, alkaline protease, and neutral protease. The protein is Regulatory protein DegR (degR) of Bacillus subtilis subsp. natto.